A 501-amino-acid chain; its full sequence is NADH-quinone oxidoreductase subunit N (501 aa).

The next 14 membrane-spanning stretches (helical) occupy residues 4-24, 34-54, 80-100, 112-132, 134-154, 167-187, 207-227, 241-261, 278-298, 314-334, 335-355, 376-396, 409-429, and 463-483; these read HLPI…RLLV, FVLA…AETL, LAGG…VYAG, GSFY…CATG, LFNL…LIAF, LIIG…LYAM, PVVI…MALF, PAPV…YALY, LQVL…MAIA, VGYI…GALL, HVLS…GVSW, MGAF…LGFF, GAWV…VYFF, and PASM…LGLF.

Belongs to the complex I subunit 2 family. NDH-1 is composed of 14 different subunits. Subunits NuoA, H, J, K, L, M, N constitute the membrane sector of the complex.

It is found in the cell membrane. The catalysed reaction is a quinone + NADH + 5 H(+)(in) = a quinol + NAD(+) + 4 H(+)(out). In terms of biological role, NDH-1 shuttles electrons from NADH, via FMN and iron-sulfur (Fe-S) centers, to quinones in the respiratory chain. The immediate electron acceptor for the enzyme in this species is believed to be a menaquinone. Couples the redox reaction to proton translocation (for every two electrons transferred, four hydrogen ions are translocated across the cytoplasmic membrane), and thus conserves the redox energy in a proton gradient. This chain is NADH-quinone oxidoreductase subunit N, found in Desulforudis audaxviator (strain MP104C).